Reading from the N-terminus, the 405-residue chain is Zinc finger protein ubi-d4 (405 aa).

Disordered stretches follow at residues Arg80–Pro147, Asp165–Arg194, Ala210–Lys230, and Ala248–Leu280. Basic and acidic residues-rich tracts occupy residues Pro100 to Gly110 and Asp126 to Asp140. The segment covering Asp165–Glu174 has biased composition (acidic residues). The C2H2-type; atypical zinc-finger motif lies at Tyr209–His246. A compositionally biased stretch (basic and acidic residues) spans Arg267–Pro277. 2 consecutive PHD-type zinc fingers follow at residues Asn284 to Cys344 and Cys341 to Leu391.

The protein belongs to the requiem/DPF family.

It is found in the cytoplasm. The protein resides in the nucleus. In terms of biological role, may be a transcription factor required for the apoptosis response following survival factor withdrawal from myeloid cells. Might also have a role in the development and maturation of lymphoid cells. This is Zinc finger protein ubi-d4 (REQ) from Gallus gallus (Chicken).